A 379-amino-acid chain; its full sequence is Putative glutamate--cysteine ligase 2 (379 aa).

Belongs to the glutamate--cysteine ligase type 2 family. YbdK subfamily.

The catalysed reaction is L-cysteine + L-glutamate + ATP = gamma-L-glutamyl-L-cysteine + ADP + phosphate + H(+). Functionally, ATP-dependent carboxylate-amine ligase which exhibits weak glutamate--cysteine ligase activity. This is Putative glutamate--cysteine ligase 2 from Roseiflexus sp. (strain RS-1).